A 156-amino-acid polypeptide reads, in one-letter code: NAD(P)H-quinone oxidoreductase subunit N (156 aa).

This sequence belongs to the complex I NdhN subunit family. As to quaternary structure, NDH-1 can be composed of about 15 different subunits; different subcomplexes with different compositions have been identified which probably have different functions.

The protein localises to the cellular thylakoid membrane. The enzyme catalyses a plastoquinone + NADH + (n+1) H(+)(in) = a plastoquinol + NAD(+) + n H(+)(out). The catalysed reaction is a plastoquinone + NADPH + (n+1) H(+)(in) = a plastoquinol + NADP(+) + n H(+)(out). In terms of biological role, NDH-1 shuttles electrons from an unknown electron donor, via FMN and iron-sulfur (Fe-S) centers, to quinones in the respiratory and/or the photosynthetic chain. The immediate electron acceptor for the enzyme in this species is believed to be plastoquinone. Couples the redox reaction to proton translocation, and thus conserves the redox energy in a proton gradient. Cyanobacterial NDH-1 also plays a role in inorganic carbon-concentration. This is NAD(P)H-quinone oxidoreductase subunit N from Prochlorococcus marinus (strain MIT 9515).